Reading from the N-terminus, the 197-residue chain is ATP-dependent Clp protease proteolytic subunit (197 aa).

Residue Ser-98 is the Nucleophile of the active site. His-123 is a catalytic residue.

The protein belongs to the peptidase S14 family. Fourteen ClpP subunits assemble into 2 heptameric rings which stack back to back to give a disk-like structure with a central cavity, resembling the structure of eukaryotic proteasomes.

The protein localises to the cytoplasm. The enzyme catalyses Hydrolysis of proteins to small peptides in the presence of ATP and magnesium. alpha-casein is the usual test substrate. In the absence of ATP, only oligopeptides shorter than five residues are hydrolyzed (such as succinyl-Leu-Tyr-|-NHMec, and Leu-Tyr-Leu-|-Tyr-Trp, in which cleavage of the -Tyr-|-Leu- and -Tyr-|-Trp bonds also occurs).. Cleaves peptides in various proteins in a process that requires ATP hydrolysis. Has a chymotrypsin-like activity. Plays a major role in the degradation of misfolded proteins. This chain is ATP-dependent Clp protease proteolytic subunit, found in Enterococcus faecalis (strain ATCC 700802 / V583).